Here is a 602-residue protein sequence, read N- to C-terminus: Elongation factor 4 (602 aa).

One can recognise a tr-type G domain in the interval 7–189 (SKIRNFCIIA…AIVRRVPPPQ (183 aa)). GTP is bound by residues 19–24 (DHGKST) and 136–139 (NKVD).

Belongs to the TRAFAC class translation factor GTPase superfamily. Classic translation factor GTPase family. LepA subfamily.

The protein localises to the cell inner membrane. The enzyme catalyses GTP + H2O = GDP + phosphate + H(+). Its function is as follows. Required for accurate and efficient protein synthesis under certain stress conditions. May act as a fidelity factor of the translation reaction, by catalyzing a one-codon backward translocation of tRNAs on improperly translocated ribosomes. Back-translocation proceeds from a post-translocation (POST) complex to a pre-translocation (PRE) complex, thus giving elongation factor G a second chance to translocate the tRNAs correctly. Binds to ribosomes in a GTP-dependent manner. This is Elongation factor 4 from Prochlorococcus marinus (strain MIT 9215).